The chain runs to 292 residues: Hydroxysqualene synthase (292 aa).

Belongs to the phytoene/squalene synthase family. HpnC subfamily.

The catalysed reaction is presqualene diphosphate + H2O = hydroxysqualene + diphosphate. It functions in the pathway secondary metabolite biosynthesis; hopanoid biosynthesis. Its function is as follows. Involved in the biosynthesis of the hopanoid precursor squalene (SQ) from farnesyl diphosphate (FPP). Catalyzes the second step, the conversion of presqualene diphosphate (PSPP) to hydroxysqualene (HSQ). This chain is Hydroxysqualene synthase, found in Rhodopseudomonas palustris (strain ATCC BAA-98 / CGA009).